The primary structure comprises 712 residues: MKRFMKLTAVWTLWLSLTLGLLSPVHAAPDTSVSNKQNFSTDVIYQIFTDRFSDGNPANNPTGAAFDGSCTNLRLYCGGDWQGIINKINDGYLTGMGITAIWISQPVENIYSVINYSGVHNTAYHGYWARDFKKTNPAYGTMQDFKNLIDTAHAHNIKVIIDFAPNHTSPASSDDPSFAENGRLYDNGNLLGGYTNDTQNLFHHYGGTDFSTIENGIYKNLYDLADLNHNNSSVDVYLKDAIKMWLDLGVDGIRVDAVKHMPFGWQKSFMSTINNYKPVFNFGEWFLGVNEISPEYHQFANESGMSLLDFPFAQKARQVFRDNTDNMYGLKAMLEGSEVDYAQVNDQVTFIDNHDMERFHTSNGDRRKLEQALAFTLTSRGVPAIYYGSEQYMSGGNDPDNRARIPSFSTTTTAYQVIQKLAPLRKSNPAIAYGSTQERWINNDVIIYERKFGNNVAVVAINRNMNTPASITGLVTSLPQGSYNDVLGGILNGNTLTVGAGGAASNFTLAPGGTAVWQYTTDATAPINGNVGPMMAKAGVTITIDGRASARQGTVYFGTTAVTGADIVAWEDTQIQVKILRVPGGIYDIRVANAAGAASNIYDNFEVLTGDQVTVRFVINNATTALGQNVFLTGNVSELGNWDPNNAIGPMYNQVVYQYPTWYYDVSVPAGQTIEFKFLKKQGSTVTWEGGANRTFTTPTSGTATVNVNWQP.

An N-terminal signal peptide occupies residues 1-27 (MKRFMKLTAVWTLWLSLTLGLLSPVHA). Residues 28–165 (APDTSVSNKQ…NIKVIIDFAP (138 aa)) form an A1 region. Residues Asp54, Asn56, Asn59, and Asn60 each coordinate Ca(2+). A disulfide bridge links Cys70 with Cys77. Residues Gly78 and Asp80 each contribute to the Ca(2+) site. 127–128 (YW) provides a ligand contact to substrate. Position 166 (Asn166) interacts with Ca(2+). Residues 166 to 229 (NHTSPASSDD…NLYDLADLNH (64 aa)) form a b region. His167 is a binding site for substrate. Ca(2+) is bound at residue Ile217. Residue 220 to 223 (NLYD) coordinates substrate. Asp226 serves as a coordination point for Ca(2+). The tract at residues 230–433 (NNSSVDVYLK…LRKSNPAIAY (204 aa)) is A2. Arg254 lines the substrate pocket. Residue Asp256 is the Nucleophile of the active site. A substrate-binding site is contributed by 259–260 (KH). His260 provides a ligand contact to Ca(2+). Residue Glu284 is the Proton donor of the active site. Residues His354, Asp398, and Arg402 each contribute to the substrate site. Residues 434-522 (GSTQERWINN…GTAVWQYTTD (89 aa)) form a c region. Residues 523–608 (ATAPINGNVG…SNIYDNFEVL (86 aa)) are d. The 81-residue stretch at 526-606 (PINGNVGPMM…AASNIYDNFE (81 aa)) folds into the IPT/TIG domain. One can recognise a CBM20 domain in the interval 607 to 712 (VLTGDQVTVR…TATVNVNWQP (106 aa)). Positions 609 to 712 (TGDQVTVRFV…TATVNVNWQP (104 aa)) are e.

This sequence belongs to the glycosyl hydrolase 13 family. In terms of assembly, monomer. The cofactor is Ca(2+).

Its subcellular location is the secreted. The catalysed reaction is Cyclizes part of a (1-&gt;4)-alpha-D-glucan chain by formation of a (1-&gt;4)-alpha-D-glucosidic bond.. The polypeptide is Cyclomaltodextrin glucanotransferase (cgt) (Bacillus sp. (strain 38-2)).